The sequence spans 230 residues: Pyridoxal phosphate homeostasis protein (230 aa).

Lys36 bears the N6-(pyridoxal phosphate)lysine mark.

The protein belongs to the pyridoxal phosphate-binding protein YggS/PROSC family.

Its function is as follows. Perhaps involved in proline biosynthesis. Functionally, pyridoxal 5'-phosphate (PLP)-binding protein, which is involved in PLP homeostasis. This chain is Pyridoxal phosphate homeostasis protein, found in Pseudomonas aeruginosa (strain ATCC 15692 / DSM 22644 / CIP 104116 / JCM 14847 / LMG 12228 / 1C / PRS 101 / PAO1).